The sequence spans 118 residues: uncharacterized protein (118 aa).

A helical membrane pass occupies residues Leu-7–Pro-27. Residues Lys-31–Asn-118 adopt a coiled-coil conformation.

The protein resides in the cell membrane. This is an uncharacterized protein from Bacillus subtilis (strain 168).